We begin with the raw amino-acid sequence, 323 residues long: Methenyltetrahydromethanopterin cyclohydrolase (323 aa).

The protein belongs to the MCH family.

The protein localises to the cytoplasm. The catalysed reaction is 5,10-methenyl-5,6,7,8-tetrahydromethanopterin + H2O = N(5)-formyl-5,6,7,8-tetrahydromethanopterin + H(+). The protein operates within one-carbon metabolism; methanogenesis from CO(2); 5,10-methenyl-5,6,7,8-tetrahydromethanopterin from CO(2): step 3/3. Catalyzes the reversible interconversion of 5-formyl-H(4)MPT to methenyl-H(4)MPT(+). The chain is Methenyltetrahydromethanopterin cyclohydrolase from Methanococcus maripaludis (strain C5 / ATCC BAA-1333).